Reading from the N-terminus, the 171-residue chain is UPF0398 protein M6_Spy1399 (171 aa).

This sequence belongs to the UPF0398 family.

This chain is UPF0398 protein M6_Spy1399, found in Streptococcus pyogenes serotype M6 (strain ATCC BAA-946 / MGAS10394).